Here is an 862-residue protein sequence, read N- to C-terminus: Mismatch repair endonuclease PMS2 (862 aa).

Positions 45, 70, 109, 110, and 111 each coordinate ATP. Composition is skewed to basic and acidic residues over residues 391–401 (DLEKPMVEKQD), 408–444 (TGEE…EPRR), 484–495 (PTDRAEVEKDSG), and 528–552 (GSQE…VDCH). The disordered stretch occupies residues 391-552 (DLEKPMVEKQ…DDSFSDVDCH (162 aa)). Threonine 573 bears the Phosphothreonine mark. Residues 577 to 580 (KRFK) carry the Nuclear localization signal motif. The residue at position 597 (threonine 597) is a Phosphothreonine.

Belongs to the DNA mismatch repair MutL/HexB family. In terms of assembly, heterodimer of PMS2 and MLH1 (MutL alpha); this interaction is required for the stability of both partners. Forms a ternary complex with MutS alpha (MSH2-MSH6) or MutS beta (MSH2-MSH3). Part of the BRCA1-associated genome surveillance complex (BASC), which contains BRCA1, MSH2, MSH6, MLH1, ATM, BLM, PMS2 and the RAD50-MRE11-NBS1 protein complex. This association could be a dynamic process changing throughout the cell cycle and within subnuclear domains. Interacts with MTMR15/FAN1.

It is found in the nucleus. The catalysed reaction is ATP + H2O = ADP + phosphate + H(+). Functionally, component of the post-replicative DNA mismatch repair system (MMR). Heterodimerizes with MLH1 to form MutL alpha. DNA repair is initiated by MutS alpha (MSH2-MSH6) or MutS beta (MSH2-MSH3) binding to a dsDNA mismatch, then MutL alpha is recruited to the heteroduplex. Assembly of the MutL-MutS-heteroduplex ternary complex in presence of RFC and PCNA is sufficient to activate endonuclease activity of PMS2. It introduces single-strand breaks near the mismatch and thus generates new entry points for the exonuclease EXO1 to degrade the strand containing the mismatch. DNA methylation would prevent cleavage and therefore assure that only the newly mutated DNA strand is going to be corrected. MutL alpha (MLH1-PMS2) interacts physically with the clamp loader subunits of DNA polymerase III, suggesting that it may play a role to recruit the DNA polymerase III to the site of the MMR. Also implicated in DNA damage signaling, a process which induces cell cycle arrest and can lead to apoptosis in case of major DNA damages. Possesses an ATPase activity, but in the absence of gross structural changes, ATP hydrolysis may not be necessary for proficient mismatch repair. This Homo sapiens (Human) protein is Mismatch repair endonuclease PMS2.